The following is a 192-amino-acid chain: uncharacterized protein (192 aa).

This is an uncharacterized protein from Aquifex aeolicus (strain VF5).